Here is a 224-residue protein sequence, read N- to C-terminus: 3-dehydroquinate dehydratase (224 aa).

3-dehydroquinate-binding positions include 35–37 and Arg65; that span reads EFR. The active-site Proton donor/acceptor is the His120. Lys146 (schiff-base intermediate with substrate) is an active-site residue. Residues Arg183, Thr202, and Gln206 each contribute to the 3-dehydroquinate site.

It belongs to the type-I 3-dehydroquinase family. In terms of assembly, homodimer.

The catalysed reaction is 3-dehydroquinate = 3-dehydroshikimate + H2O. It functions in the pathway metabolic intermediate biosynthesis; chorismate biosynthesis; chorismate from D-erythrose 4-phosphate and phosphoenolpyruvate: step 3/7. In terms of biological role, involved in the third step of the chorismate pathway, which leads to the biosynthesis of aromatic amino acids. Catalyzes the cis-dehydration of 3-dehydroquinate (DHQ) and introduces the first double bond of the aromatic ring to yield 3-dehydroshikimate. This Methanobrevibacter smithii (strain ATCC 35061 / DSM 861 / OCM 144 / PS) protein is 3-dehydroquinate dehydratase.